Here is a 568-residue protein sequence, read N- to C-terminus: DEAD-box ATP-dependent RNA helicase 51 (568 aa).

Composition is skewed to basic and acidic residues over residues 1-13 (MVES…EELK) and 23-47 (KKNE…TQKK). The tract at residues 1–70 (MVESDKSSVE…EEEEKVEAME (70 aa)) is disordered. Positions 13–78 (KKRVRKRSRG…MEDGEDEKNI (66 aa)) form a coiled coil. Over residues 60–70 (EEEEEKVEAME) the composition is skewed to acidic residues. Positions 89–117 (VTFDSLDLSEQTSIAIKEMGFQYMTQIQA) match the Q motif motif. In terms of domain architecture, Helicase ATP-binding spans 120–295 (IQPLLEGKDV…RVSLTSPVHV (176 aa)). An ATP-binding site is contributed by 133–140 (ARTGSGKT). A DEAD box motif is present at residues 243-246 (DEAD). The region spanning 321 to 468 (RLILLISFLK…ELEFNEKRLS (148 aa)) is the Helicase C-terminal domain. The segment at 540–568 (KVRKARKQQGRNGFSPYSPYGKSTPTKEA) is disordered.

Belongs to the DEAD box helicase family. DDX18/HAS1 subfamily.

The enzyme catalyses ATP + H2O = ADP + phosphate + H(+). This Arabidopsis thaliana (Mouse-ear cress) protein is DEAD-box ATP-dependent RNA helicase 51 (RH51).